The following is a 171-amino-acid chain: Co-chaperone protein HscB homolog (171 aa).

The J domain occupies 2 to 74 (NHFELFGLPN…VTRAEYILSE (73 aa)).

The protein belongs to the HscB family. Interacts with HscA and stimulates its ATPase activity.

Co-chaperone involved in the maturation of iron-sulfur cluster-containing proteins. Seems to help targeting proteins to be folded toward HscA. The polypeptide is Co-chaperone protein HscB homolog (Aliivibrio salmonicida (strain LFI1238) (Vibrio salmonicida (strain LFI1238))).